A 105-amino-acid polypeptide reads, in one-letter code: uncharacterized protein (105 aa).

This is an uncharacterized protein from Fowlpox virus (strain NVSL) (FPV).